The following is a 253-amino-acid chain: Major prion protein (253 aa).

Positions Met1–Cys22 are cleaved as a signal peptide. Residues Lys23 to Ser230 form an interaction with GRB2, ERI3 and SYN1 region. The segment at Pro26–Asn108 is disordered. Tandem repeats lie at residues Pro51–Gln59, Pro60–Gln67, Pro68–Gln75, Pro76–Gln83, and Pro84–Gln91. The segment at Pro51–Gln91 is 5 X 8 AA tandem repeats of P-H-G-G-G-W-G-Q. The span at Gln52–Thr95 shows a compositional bias: gly residues. Cu(2+)-binding residues include His61, Gly62, Gly63, His69, Gly70, Gly71, His77, Gly78, Gly79, His85, Gly86, and Gly87. A disulfide bridge connects residues Cys179 and Cys214. Asn181 and Asn197 each carry an N-linked (GlcNAc...) asparagine glycan. Ser230 carries GPI-anchor amidated serine lipidation. Residues Ser231–Gly253 constitute a propeptide, removed in mature form.

This sequence belongs to the prion family. Monomer and homodimer. Has a tendency to aggregate into amyloid fibrils containing a cross-beta spine, formed by a steric zipper of superposed beta-strands. Soluble oligomers may represent an intermediate stage on the path to fibril formation. Copper binding may promote oligomerization. Interacts with GRB2, APP, ERI3/PRNPIP and SYN1. Mislocalized cytosolically exposed PrP interacts with MGRN1; this interaction alters MGRN1 subcellular location and causes lysosomal enlargement. Interacts with KIAA1191.

It localises to the cell membrane. The protein resides in the golgi apparatus. Its function is as follows. Its primary physiological function is unclear. Has cytoprotective activity against internal or environmental stresses. May play a role in neuronal development and synaptic plasticity. May be required for neuronal myelin sheath maintenance. May play a role in iron uptake and iron homeostasis. Soluble oligomers are toxic to cultured neuroblastoma cells and induce apoptosis (in vitro). Association with GPC1 (via its heparan sulfate chains) targets PRNP to lipid rafts. Also provides Cu(2+) or Zn(2+) for the ascorbate-mediated GPC1 deaminase degradation of its heparan sulfate side chains. This is Major prion protein (PRNP) from Hylobates lar (Lar gibbon).